Consider the following 363-residue polypeptide: Aminomethyltransferase (363 aa).

The protein belongs to the GcvT family. In terms of assembly, the glycine cleavage system is composed of four proteins: P, T, L and H.

It catalyses the reaction N(6)-[(R)-S(8)-aminomethyldihydrolipoyl]-L-lysyl-[protein] + (6S)-5,6,7,8-tetrahydrofolate = N(6)-[(R)-dihydrolipoyl]-L-lysyl-[protein] + (6R)-5,10-methylene-5,6,7,8-tetrahydrofolate + NH4(+). Its function is as follows. The glycine cleavage system catalyzes the degradation of glycine. The protein is Aminomethyltransferase of Nitrosomonas eutropha (strain DSM 101675 / C91 / Nm57).